We begin with the raw amino-acid sequence, 236 residues long: Protein N-lysine methyltransferase METTL21A (236 aa).

S-adenosyl-L-methionine is bound by residues Trp-47, 73-75 (GAG), Asp-112, Trp-143, and Ala-161.

Belongs to the methyltransferase superfamily. METTL21 family. Interacts with heat shock 70 family members; at least some of these proteins are methylation substrates.

The protein resides in the cytoplasm. It catalyses the reaction L-lysyl-[protein] + 3 S-adenosyl-L-methionine = N(6),N(6),N(6)-trimethyl-L-lysyl-[protein] + 3 S-adenosyl-L-homocysteine + 3 H(+). In terms of biological role, protein-lysine methyltransferase that selectively trimethylates residues in heat shock protein 70 (HSP70) family members. Contributes to the in vivo trimethylation of Lys residues in HSPA1 and HSPA8. In vitro methylates 'Lys-561' in HSPA1, 'Lys-564' in HSPA2, 'Lys-585' in HSPA5, 'Lys-563' in HSPA6 and 'Lys-561' in HSPA8. The chain is Protein N-lysine methyltransferase METTL21A (METTL21A) from Pongo abelii (Sumatran orangutan).